A 402-amino-acid chain; its full sequence is MTYQQPDAKGFYGKFGGQFVPETLMTAVIELDKAYREAKEDSSFQAELDDLLKNYVGRETPLYHAKRLTDHIGGAQIYLKREDLNHTGAHKINNALGQVLLAKRMGKKKIIAETGAGQHGVATATAAALFDMDCTIYVGEEDVKRQALNVFRMELLGAKVFSVTDGSRVLKDAVNAALRAWVAGIEDTHYIMGSALGPAPFPEIVRDFQSVIGREAKRQYAEISGGKLPDAVMACIGGGSNAIGMFYPFVNDKSVAMYGAEASGLGLDTEKHAATFAKGRPGILHGALMDVLQDAHGQIMEAFSISAGLDYPGVGPEHCYFNEIGRATYDSITDEEALEGFKLLSRLEGIIPALESSHAIALAQKVAAKMSPDQSLIVCLSGRGDKDVMQVKERFEAEAEGK.

At lysine 91 the chain carries N6-(pyridoxal phosphate)lysine.

This sequence belongs to the TrpB family. Tetramer of two alpha and two beta chains. Pyridoxal 5'-phosphate is required as a cofactor.

The catalysed reaction is (1S,2R)-1-C-(indol-3-yl)glycerol 3-phosphate + L-serine = D-glyceraldehyde 3-phosphate + L-tryptophan + H2O. Its pathway is amino-acid biosynthesis; L-tryptophan biosynthesis; L-tryptophan from chorismate: step 5/5. Functionally, the beta subunit is responsible for the synthesis of L-tryptophan from indole and L-serine. This Streptococcus thermophilus (strain ATCC BAA-250 / LMG 18311) protein is Tryptophan synthase beta chain.